Here is a 193-residue protein sequence, read N- to C-terminus: Orotate phosphoribosyltransferase (193 aa).

Glutamate 116–serine 124 provides a ligand contact to 5-phospho-alpha-D-ribose 1-diphosphate. Residues threonine 120 and arginine 148 each coordinate orotate.

It belongs to the purine/pyrimidine phosphoribosyltransferase family. PyrE subfamily. In terms of assembly, homodimer. Mg(2+) is required as a cofactor.

It catalyses the reaction orotidine 5'-phosphate + diphosphate = orotate + 5-phospho-alpha-D-ribose 1-diphosphate. It participates in pyrimidine metabolism; UMP biosynthesis via de novo pathway; UMP from orotate: step 1/2. Functionally, catalyzes the transfer of a ribosyl phosphate group from 5-phosphoribose 1-diphosphate to orotate, leading to the formation of orotidine monophosphate (OMP). In Clostridium tetani (strain Massachusetts / E88), this protein is Orotate phosphoribosyltransferase.